Consider the following 1218-residue polypeptide: Thrombospondin type 1 domain-containing protein (1218 aa).

Disordered regions lie at residues 82–101, 189–240, 298–383, and 445–471; these read SAGFPRSASSSASSAPPCSS, SLEE…SRTR, HTAN…VNGL, and GGKSRRSEWRRKRTGMMASEARESHRG. Over residues 201-210 the composition is skewed to basic and acidic residues; it reads GYEEERERRS. Low complexity predominate over residues 315 to 375; the sequence is SSRFTSKASS…SSPLSSSPDS (61 aa). In terms of domain architecture, TSP type-1 spans 638 to 704; it reads SCITGPWSEW…RRKCNLGACP (67 aa). A helical membrane pass occupies residues 886 to 906; the sequence is GVSHLWISLCAGAVAAVVFLV. Residues 1129–1153 form a disordered region; it reads RRRARRGRREGDSGEGGDCGEARKA.

In terms of assembly, component of a complex, at least composed of cysteine repeat modular protein A (CRMPa), cysteine repeat modular protein B (CRMPb), micronemal protein 15 (MIC15) and thrombospondin type 1 domain-containing protein (TSP1).

The protein localises to the membrane. In terms of biological role, required for rhoptry secretion. Plays a role in host cell invasion. This is Thrombospondin type 1 domain-containing protein from Toxoplasma gondii.